A 722-amino-acid chain; its full sequence is Glycine--tRNA ligase beta subunit (722 aa).

The protein belongs to the class-II aminoacyl-tRNA synthetase family. Tetramer of two alpha and two beta subunits.

The protein resides in the cytoplasm. The catalysed reaction is tRNA(Gly) + glycine + ATP = glycyl-tRNA(Gly) + AMP + diphosphate. The sequence is that of Glycine--tRNA ligase beta subunit (glyS) from Synechocystis sp. (strain ATCC 27184 / PCC 6803 / Kazusa).